Consider the following 220-residue polypeptide: Pyridoxine/pyridoxamine 5'-phosphate oxidase (220 aa).

Substrate contacts are provided by residues 13 to 16 (RVEY) and Lys77. Residues 72 to 77 (RTVLCK), 87 to 88 (FT), Lys94, and Gln116 contribute to the FMN site. Positions 134, 138, and 142 each coordinate substrate. Residues 151–152 (QS) and Trp197 contribute to the FMN site. Substrate is bound at residue 203 to 205 (RLH). Arg207 serves as a coordination point for FMN.

Belongs to the pyridoxamine 5'-phosphate oxidase family. As to quaternary structure, homodimer. FMN serves as cofactor.

The catalysed reaction is pyridoxamine 5'-phosphate + O2 + H2O = pyridoxal 5'-phosphate + H2O2 + NH4(+). It carries out the reaction pyridoxine 5'-phosphate + O2 = pyridoxal 5'-phosphate + H2O2. It functions in the pathway cofactor metabolism; pyridoxal 5'-phosphate salvage; pyridoxal 5'-phosphate from pyridoxamine 5'-phosphate: step 1/1. It participates in cofactor metabolism; pyridoxal 5'-phosphate salvage; pyridoxal 5'-phosphate from pyridoxine 5'-phosphate: step 1/1. In terms of biological role, catalyzes the oxidation of either pyridoxine 5'-phosphate (PNP) or pyridoxamine 5'-phosphate (PMP) into pyridoxal 5'-phosphate (PLP). In Mycolicibacterium paratuberculosis (strain ATCC BAA-968 / K-10) (Mycobacterium paratuberculosis), this protein is Pyridoxine/pyridoxamine 5'-phosphate oxidase.